The sequence spans 401 residues: 4-hydroxy-3-methylbut-2-en-1-yl diphosphate synthase (ferredoxin) (401 aa).

[4Fe-4S] cluster is bound by residues Cys306, Cys309, Cys340, and Glu347.

It belongs to the IspG family. It depends on [4Fe-4S] cluster as a cofactor.

The catalysed reaction is (2E)-4-hydroxy-3-methylbut-2-enyl diphosphate + 2 oxidized [2Fe-2S]-[ferredoxin] + H2O = 2-C-methyl-D-erythritol 2,4-cyclic diphosphate + 2 reduced [2Fe-2S]-[ferredoxin] + H(+). It participates in isoprenoid biosynthesis; isopentenyl diphosphate biosynthesis via DXP pathway; isopentenyl diphosphate from 1-deoxy-D-xylulose 5-phosphate: step 5/6. In terms of biological role, converts 2C-methyl-D-erythritol 2,4-cyclodiphosphate (ME-2,4cPP) into 1-hydroxy-2-methyl-2-(E)-butenyl 4-diphosphate. This chain is 4-hydroxy-3-methylbut-2-en-1-yl diphosphate synthase (ferredoxin), found in Synechococcus sp. (strain CC9902).